We begin with the raw amino-acid sequence, 585 residues long: Polyadenylate-binding protein, cytoplasmic and nuclear (585 aa).

The tract at residues 14–37 (QLKIEEQTAPTTTESETPKVETSG) is disordered. RRM domains are found at residues 38–116 (ASLY…WSQR), 126–203 (GNIY…LHVS), 219–296 (TNVY…RAQK), and 322–399 (VNLF…IAQR). Residues 488 to 567 (GQFPRNGQQQ…AHAAYQKFKE (80 aa)) enclose the PABC domain.

The protein belongs to the polyadenylate-binding protein type-1 family.

Its subcellular location is the cytoplasm. The protein localises to the nucleus. Binds the poly(A) tail of mRNA. Appears to be an important mediator of the multiple roles of the poly(A) tail in mRNA biogenesis, stability and translation. In the nucleus, involved in both mRNA cleavage and polyadenylation. Is also required for efficient mRNA export to the cytoplasm. Acts in concert with a poly(A)-specific nuclease (PAN) to affect poly(A) tail shortening, which may occur concomitantly with either nucleocytoplasmic mRNA transport or translational initiation. In the cytoplasm, stimulates translation initiation and regulates mRNA decay through translation termination-coupled poly(A) shortening, probably mediated by PAN. In Eremothecium gossypii (strain ATCC 10895 / CBS 109.51 / FGSC 9923 / NRRL Y-1056) (Yeast), this protein is Polyadenylate-binding protein, cytoplasmic and nuclear (PAB1).